Here is a 506-residue protein sequence, read N- to C-terminus: Chromosomal replication initiator protein DnaA (506 aa).

The interval 1-77 (MECATTATTP…IWAEESGAKR (77 aa)) is domain I, interacts with DnaA modulators. A domain II region spans residues 77 to 162 (RRVDLAVRNA…AVAGDVASGS (86 aa)). Composition is skewed to basic and acidic residues over residues 103-112 (TERTDMHSGD) and 121-142 (SDGRSTDARGADGRGSDARAVE). Residues 103-142 (TERTDMHSGDTRQQSARISDGRSTDARGADGRGSDARAVE) are disordered. The segment at 163 to 384 (PLDARLTFET…GALNKLLAFN (222 aa)) is domain III, AAA+ region. Positions 210, 212, 213, and 214 each coordinate ATP. Residues 385–506 (QLTGEPVTLE…EVLKRLALEA (122 aa)) are domain IV, binds dsDNA.

The protein belongs to the DnaA family. In terms of assembly, oligomerizes as a right-handed, spiral filament on DNA at oriC.

Its subcellular location is the cytoplasm. Plays an essential role in the initiation and regulation of chromosomal replication. ATP-DnaA binds to the origin of replication (oriC) to initiate formation of the DNA replication initiation complex once per cell cycle. Binds the DnaA box (a 9 base pair repeat at the origin) and separates the double-stranded (ds)DNA. Forms a right-handed helical filament on oriC DNA; dsDNA binds to the exterior of the filament while single-stranded (ss)DNA is stabiized in the filament's interior. The ATP-DnaA-oriC complex binds and stabilizes one strand of the AT-rich DNA unwinding element (DUE), permitting loading of DNA polymerase. After initiation quickly degrades to an ADP-DnaA complex that is not apt for DNA replication. Binds acidic phospholipids. The polypeptide is Chromosomal replication initiator protein DnaA (Xanthobacter autotrophicus (strain ATCC BAA-1158 / Py2)).